Reading from the N-terminus, the 211-residue chain is Uridine kinase (211 aa).

12 to 19 (GGSGSGKT) contributes to the ATP binding site.

It belongs to the uridine kinase family.

It is found in the cytoplasm. It carries out the reaction uridine + ATP = UMP + ADP + H(+). The enzyme catalyses cytidine + ATP = CMP + ADP + H(+). It participates in pyrimidine metabolism; CTP biosynthesis via salvage pathway; CTP from cytidine: step 1/3. The protein operates within pyrimidine metabolism; UMP biosynthesis via salvage pathway; UMP from uridine: step 1/1. The chain is Uridine kinase from Geobacillus sp. (strain WCH70).